We begin with the raw amino-acid sequence, 205 residues long: Large ribosomal subunit protein uL18 (205 aa).

The protein belongs to the universal ribosomal protein uL18 family. As to quaternary structure, part of the 50S ribosomal subunit. Contacts the 5S and 23S rRNAs.

In terms of biological role, this is one of the proteins that bind and probably mediate the attachment of the 5S RNA into the large ribosomal subunit, where it forms part of the central protuberance. The protein is Large ribosomal subunit protein uL18 of Pyrobaculum neutrophilum (strain DSM 2338 / JCM 9278 / NBRC 100436 / V24Sta) (Thermoproteus neutrophilus).